Reading from the N-terminus, the 251-residue chain is Octanoyltransferase (251 aa).

One can recognise a BPL/LPL catalytic domain in the interval 56-241 (ADTGDEIWVV…NLDGASAAAD (186 aa)). Substrate-binding positions include 96–103 (RGGQITYH), 168–170 (ALG), and 181–183 (GLS). Cys-199 serves as the catalytic Acyl-thioester intermediate.

It belongs to the LipB family.

It localises to the cytoplasm. The catalysed reaction is octanoyl-[ACP] + L-lysyl-[protein] = N(6)-octanoyl-L-lysyl-[protein] + holo-[ACP] + H(+). Its pathway is protein modification; protein lipoylation via endogenous pathway; protein N(6)-(lipoyl)lysine from octanoyl-[acyl-carrier-protein]: step 1/2. Functionally, catalyzes the transfer of endogenously produced octanoic acid from octanoyl-acyl-carrier-protein onto the lipoyl domains of lipoate-dependent enzymes. Lipoyl-ACP can also act as a substrate although octanoyl-ACP is likely to be the physiological substrate. The polypeptide is Octanoyltransferase (Burkholderia cenocepacia (strain HI2424)).